Here is a 216-residue protein sequence, read N- to C-terminus: Glycerol-3-phosphate acyltransferase (216 aa).

The next 6 helical transmembrane spans lie at 3–23, 48–68, 82–102, 112–132, 142–162, and 166–186; these read FPIFALFSFVSGSIPFGYWIA, IGWKFGFIVLALDITKGMLPV, FQLLCGVCAVLGHMFSPFLGF, FGVFLVLTPIACLGAVLVFWV, LGSIFASITLPLVYAFSTILL, and EVSYWVLGTMVFISFGIILTH.

It belongs to the PlsY family. As to quaternary structure, probably interacts with PlsX.

The protein localises to the cell inner membrane. The catalysed reaction is an acyl phosphate + sn-glycerol 3-phosphate = a 1-acyl-sn-glycero-3-phosphate + phosphate. It participates in lipid metabolism; phospholipid metabolism. Functionally, catalyzes the transfer of an acyl group from acyl-phosphate (acyl-PO(4)) to glycerol-3-phosphate (G3P) to form lysophosphatidic acid (LPA). This enzyme utilizes acyl-phosphate as fatty acyl donor, but not acyl-CoA or acyl-ACP. This chain is Glycerol-3-phosphate acyltransferase, found in Leptospira interrogans serogroup Icterohaemorrhagiae serovar Lai (strain 56601).